We begin with the raw amino-acid sequence, 355 residues long: Green-sensitive opsin (355 aa).

At 1–36 the chain is on the extracellular side; that stretch reads MNGTEGINFYVPMSNKTGVVRSPFEYPQYYLAEPWK. 2 N-linked (GlcNAc...) asparagine glycosylation sites follow: Asn-2 and Asn-15. The helical transmembrane segment at 37 to 61 threads the bilayer; that stretch reads YRLVCCYIFFLISTGLPINLLTLLV. The Cytoplasmic portion of the chain corresponds to 62–73; it reads TFKHKKLRQPLN. The chain crosses the membrane as a helical span at residues 74–99; it reads YILVNLAVADLFMACFGFTVTFYTAW. Over 100–113 the chain is Extracellular; that stretch reads NGYFVFGPVGCAVE. A disulfide bond links Cys-110 and Cys-187. The chain crosses the membrane as a helical span at residues 114 to 133; the sequence is GFFATLGGQVALWSLVVLAI. Over 134-152 the chain is Cytoplasmic; the sequence is ERYIVVCKPMGNFRFSATH. Residues 153-176 form a helical membrane-spanning segment; the sequence is AMMGIAFTWVMAFSCAAPPLFGWS. Residues 177–202 are Extracellular-facing; that stretch reads RYMPEGMQCSCGPDYYTHNPDYHNES. A helical transmembrane segment spans residues 203–230; sequence YVLYMFVIHFIIPVVVIFFSYGRLICKV. At 231–252 the chain is on the cytoplasmic side; sequence REAAAQQQESATTQKAEKEVTR. A helical transmembrane segment spans residues 253–276; sequence MVILMVLGFMLAWTPYAVVAFWIF. Over 277 to 284 the chain is Extracellular; that stretch reads TNKGADFT. A helical membrane pass occupies residues 285–309; it reads ATLMAVPAFFSKSSSLYNPIIYVLM. Lys-296 bears the N6-(retinylidene)lysine mark. Over 310-355 the chain is Cytoplasmic; that stretch reads NKQFRNCMITTICCGKNPFGDEDVSSTVSQSKTEVSSVSSSQVSPA.

It belongs to the G-protein coupled receptor 1 family. Opsin subfamily. Post-translationally, phosphorylated on some or all of the serine and threonine residues present in the C-terminal region. The color pigments are found in the cone photoreceptor cells.

It is found in the membrane. Its function is as follows. Visual pigments are the light-absorbing molecules that mediate vision. They consist of an apoprotein, opsin, covalently linked to cis-retinal. The chain is Green-sensitive opsin (PRA1) from Gallus gallus (Chicken).